Here is a 952-residue protein sequence, read N- to C-terminus: uncharacterized protein (952 aa).

A CheB-type methylesterase domain is found at 1–141; that stretch reads MASLLARHTK…PWIADYLIRR (141 aa). Positions 168 to 440 constitute a CheR-type methyltransferase domain; the sequence is VGQFDGLEPA…SARHRIWQAL (273 aa). The segment covering 923 to 935 has biased composition (polar residues); it reads HNQTEASPETSSG. The disordered stretch occupies residues 923–952; that stretch reads HNQTEASPETSSGGLPGSDGTGADGGAPRA. Residues 936-952 show a composition bias toward gly residues; it reads GLPGSDGTGADGGAPRA.

This is an uncharacterized protein from Rhodobacter capsulatus (Rhodopseudomonas capsulata).